We begin with the raw amino-acid sequence, 221 residues long: 3-isopropylmalate dehydratase small subunit (221 aa).

This sequence belongs to the LeuD family. LeuD type 1 subfamily. As to quaternary structure, heterodimer of LeuC and LeuD.

The catalysed reaction is (2R,3S)-3-isopropylmalate = (2S)-2-isopropylmalate. It participates in amino-acid biosynthesis; L-leucine biosynthesis; L-leucine from 3-methyl-2-oxobutanoate: step 2/4. Its function is as follows. Catalyzes the isomerization between 2-isopropylmalate and 3-isopropylmalate, via the formation of 2-isopropylmaleate. In Nitrosomonas europaea (strain ATCC 19718 / CIP 103999 / KCTC 2705 / NBRC 14298), this protein is 3-isopropylmalate dehydratase small subunit.